The chain runs to 154 residues: Ribosomal RNA large subunit methyltransferase H (154 aa).

Residue Gly-103 coordinates S-adenosyl-L-methionine.

It belongs to the RNA methyltransferase RlmH family. In terms of assembly, homodimer.

It localises to the cytoplasm. The catalysed reaction is pseudouridine(1915) in 23S rRNA + S-adenosyl-L-methionine = N(3)-methylpseudouridine(1915) in 23S rRNA + S-adenosyl-L-homocysteine + H(+). In terms of biological role, specifically methylates the pseudouridine at position 1915 (m3Psi1915) in 23S rRNA. The sequence is that of Ribosomal RNA large subunit methyltransferase H from Gemmatimonas aurantiaca (strain DSM 14586 / JCM 11422 / NBRC 100505 / T-27).